A 96-amino-acid chain; its full sequence is Muconolactone Delta-isomerase 2 (96 aa).

It belongs to the muconolactone Delta-isomerase family. As to quaternary structure, homodecamer.

The enzyme catalyses (S)-muconolactone = (4,5-dihydro-5-oxofuran-2-yl)-acetate. The protein operates within aromatic compound metabolism; beta-ketoadipate pathway; 5-oxo-4,5-dihydro-2-furylacetate from catechol: step 3/3. This Acinetobacter lwoffii protein is Muconolactone Delta-isomerase 2 (catC2).